A 121-amino-acid chain; its full sequence is UPF0102 protein Hhal_2103 (121 aa).

Residues 1–20 (MMAPQTTRNDPRQRGQEAEE) form a disordered region. The segment covering 9 to 20 (NDPRQRGQEAEE) has biased composition (basic and acidic residues).

Belongs to the UPF0102 family.

The polypeptide is UPF0102 protein Hhal_2103 (Halorhodospira halophila (strain DSM 244 / SL1) (Ectothiorhodospira halophila (strain DSM 244 / SL1))).